A 591-amino-acid polypeptide reads, in one-letter code: L-fucose isomerase (591 aa).

Residues E337 and D361 each act as proton acceptor in the active site. Mn(2+)-binding residues include E337, D361, and H528.

This sequence belongs to the L-fucose isomerase family. Homohexamer. Requires Mn(2+) as cofactor.

Its subcellular location is the cytoplasm. It carries out the reaction L-fucose = L-fuculose. It participates in carbohydrate degradation; L-fucose degradation; L-lactaldehyde and glycerone phosphate from L-fucose: step 1/3. Functionally, converts the aldose L-fucose into the corresponding ketose L-fuculose. This is L-fucose isomerase from Salmonella choleraesuis (strain SC-B67).